Reading from the N-terminus, the 425-residue chain is NAC domain-containing protein 10 (425 aa).

Positions 1 to 10 (MESPDSSSGS) are enriched in polar residues. Residues 1–34 (MESPDSSSGSAPPRVLRRQQQQPGSAPELPPGFR) form a disordered region. Low complexity predominate over residues 12–23 (PPRVLRRQQQQP). Residues 29 to 200 (LPPGFRFHPT…DWVLCRIYKK (172 aa)) form the NAC domain. The DNA-binding element occupies 129–206 (VGVKKALVFY…IYKKTNKAGA (78 aa)).

As to expression, highest expression in stamens. Expressed in leaves.

The protein resides in the nucleus. Functionally, transcription factor of the NAC family associated with male fertility. Involved in anther development, but not in senescence. Reduced expression of NAC5 via RNAi leads to male-sterility. This Oryza sativa subsp. japonica (Rice) protein is NAC domain-containing protein 10.